A 166-amino-acid polypeptide reads, in one-letter code: Mitochondrial inner membrane protease subunit 1 (166 aa).

Catalysis depends on residues serine 40 and lysine 83.

It belongs to the peptidase S26 family. IMP1 subfamily. As to quaternary structure, heterodimer of 2 subunits, IMMPL1 and IMMPL2.

It localises to the mitochondrion inner membrane. Its function is as follows. Catalyzes the removal of transit peptides required for the targeting of proteins from the mitochondrial matrix, across the inner membrane, into the inter-membrane space. Known to process the nuclear encoded protein DIABLO. The chain is Mitochondrial inner membrane protease subunit 1 (IMMP1L) from Homo sapiens (Human).